The following is a 180-amino-acid chain: WPP domain-containing protein 2 (180 aa).

Residues 1 to 26 (MAETAETINTTISSPPPESESSTTIS) show a composition bias toward low complexity. 2 disordered regions span residues 1–61 (MAET…LRIW) and 140–180 (SVKA…KSEA). The span at 27–36 (AMTDPTSQEA) shows a compositional bias: polar residues. Basic and acidic residues predominate over residues 37-53 (ASKDTDLTKEAESEKKP). Positions 44–147 (TKEAESEKKP…LESVKARSNA (104 aa)) are WPP. Phosphoserine is present on Ser173.

As to quaternary structure, binds to FPP proteins. Interacts with WAP, WIP1, WIP2 and WIP3 through its WPP domain. Interacts with WIT1 and HSP70-1. In terms of tissue distribution, expressed in roots, stems, leaves and flowers.

Its subcellular location is the nucleus envelope. The protein resides in the cytoplasm. The protein localises to the nucleus. It localises to the golgi apparatus. Regulates the mitotic activity in roots. Plays a role with HSP70-1 in facilitating WIT1 nuclear envelope targeting. The polypeptide is WPP domain-containing protein 2 (WPP2) (Arabidopsis thaliana (Mouse-ear cress)).